The primary structure comprises 468 residues: Zinc finger CCCH domain-containing protein 32 (468 aa).

The disordered stretch occupies residues 1 to 25 (MYARNPPLNGSQSAQAPDWTPADAD). 5 C3H1-type zinc fingers span residues 45–73 (RPGA…HPRD), 90–118 (RFGE…HPKN), 136–164 (REGD…HPQP), 289–317 (RPGE…HPRD), and 335–363 (RPGV…HPMG).

It localises to the nucleus. In Arabidopsis thaliana (Mouse-ear cress), this protein is Zinc finger CCCH domain-containing protein 32.